The sequence spans 61 residues: Large ribosomal subunit protein uL30 (61 aa).

Belongs to the universal ribosomal protein uL30 family. As to quaternary structure, part of the 50S ribosomal subunit.

This Chlorobaculum parvum (strain DSM 263 / NCIMB 8327) (Chlorobium vibrioforme subsp. thiosulfatophilum) protein is Large ribosomal subunit protein uL30.